The chain runs to 906 residues: Protein translocase subunit SecA (906 aa).

ATP contacts are provided by residues Gln87, 105-109 (GEGKT), and Asp521. Low complexity predominate over residues 849-865 (STATAAEPAPEASQSQS). The disordered stretch occupies residues 849–897 (STATAAEPAPEASQSQSTNDATASQNPPITEVEASKVGRNQPCPCGSGK). Residues 866-876 (TNDATASQNPP) are compositionally biased toward polar residues. Zn(2+)-binding residues include Cys891, Cys893, Cys902, and Cys903.

It belongs to the SecA family. As to quaternary structure, monomer and homodimer. Part of the essential Sec protein translocation apparatus which comprises SecA, SecYEG and auxiliary proteins SecDF-YajC and YidC. Requires Zn(2+) as cofactor.

It localises to the cell inner membrane. Its subcellular location is the cytoplasm. It carries out the reaction ATP + H2O + cellular proteinSide 1 = ADP + phosphate + cellular proteinSide 2.. Functionally, part of the Sec protein translocase complex. Interacts with the SecYEG preprotein conducting channel. Has a central role in coupling the hydrolysis of ATP to the transfer of proteins into and across the cell membrane, serving both as a receptor for the preprotein-SecB complex and as an ATP-driven molecular motor driving the stepwise translocation of polypeptide chains across the membrane. The chain is Protein translocase subunit SecA from Dichelobacter nodosus (strain VCS1703A).